The primary structure comprises 720 residues: Nucleoporin 88 (720 aa).

The stretch at 584-611 forms a coiled coil; it reads LALCREDRKSLTEAAERLADKYEDAKYR.

In terms of tissue distribution, widely expressed. Higher levels of expression are detected in highly proliferative frontal regions of the embryo, e.g. brain, eye and anterior trunk.

Its subcellular location is the nucleus. The protein localises to the nuclear pore complex. In terms of biological role, component of the nuclear pore complex. The sequence is that of Nucleoporin 88 from Danio rerio (Zebrafish).